Reading from the N-terminus, the 864-residue chain is Structure-specific endonuclease subunit SLX4 (864 aa).

Residues 35-54 (SPLSLPSPTSLLDFLSTSTS) show a composition bias toward low complexity. Disordered stretches follow at residues 35–72 (SPLSLPSPTSLLDFLSTSTSRGPARSDTDGDKTQGKEV), 89–113 (VVSGTGGKAATGKKLKRRTESPGNA), 160–193 (KANQTVSLQPETKKSAPKGCNDTTQPAENGHIND), 288–318 (GLSDSRQSSITEDSESATSKPRRVKAKNPPK), 348–382 (LSDEPGKEKNVAKRTSGARYAKPGRKKSATTEKKN), 413–432 (ANGHSEDQHEQNEGTSHISN), and 625–771 (KTSN…ETLP). Over residues 58-72 (ARSDTDGDKTQGKEV) the composition is skewed to basic and acidic residues. 2 stretches are compositionally biased toward polar residues: residues 160–169 (KANQTVSLQP) and 289–306 (LSDSRQSSITEDSESATS). Positions 307–317 (KPRRVKAKNPP) are enriched in basic residues. Residues 659–668 (SIPQTATTQV) are compositionally biased toward polar residues. Low complexity predominate over residues 683-695 (VPVPSRRSTSTSK). Residues 743–771 (PESFNLPTTPLTIRSGKIPSTGTASETLP) are compositionally biased toward polar residues.

The protein belongs to the SLX4 family. In terms of assembly, forms a heterodimer with SLX1. In terms of processing, phosphorylated in response to DNA damage.

It is found in the nucleus. In terms of biological role, regulatory subunit of the SLX1-SLX4 structure-specific endonuclease that resolves DNA secondary structures generated during DNA repair and recombination. Has endonuclease activity towards branched DNA substrates, introducing single-strand cuts in duplex DNA close to junctions with ss-DNA. In Paracoccidioides brasiliensis (strain Pb03), this protein is Structure-specific endonuclease subunit SLX4.